Here is a 506-residue protein sequence, read N- to C-terminus: Beta-glucosidase 13 (506 aa).

The first 25 residues, 1–25 (MAAAGEVVMLGGILLPLLLVVAVSG), serve as a signal peptide directing secretion. Gln-49 contributes to the a beta-D-glucoside binding site. N-linked (GlcNAc...) asparagine glycosylation occurs at Asn-118. Residues His-153 and 198 to 199 (NE) contribute to the a beta-D-glucoside site. Catalysis depends on Glu-199, which acts as the Proton donor. An intrachain disulfide couples Cys-219 to Cys-226. N-linked (GlcNAc...) asparagine glycosylation is present at Asn-225. Tyr-342 contacts a beta-D-glucoside. N-linked (GlcNAc...) asparagine glycosylation is found at Asn-357 and Asn-367. Glu-413 is a binding site for a beta-D-glucoside. Glu-413 functions as the Nucleophile in the catalytic mechanism. The N-linked (GlcNAc...) asparagine glycan is linked to Asn-421. A beta-D-glucoside is bound by residues Trp-462, 469 to 470 (EW), and Phe-478.

It belongs to the glycosyl hydrolase 1 family.

It catalyses the reaction Hydrolysis of terminal, non-reducing beta-D-glucosyl residues with release of beta-D-glucose.. The polypeptide is Beta-glucosidase 13 (BGLU13) (Oryza sativa subsp. japonica (Rice)).